The sequence spans 160 residues: Major pollen allergen Aln g 1 (160 aa).

It belongs to the BetVI family.

The chain is Major pollen allergen Aln g 1 from Alnus glutinosa (European alder).